We begin with the raw amino-acid sequence, 193 residues long: NADH-quinone oxidoreductase subunit B (193 aa).

[4Fe-4S] cluster contacts are provided by Cys-72, Cys-73, Cys-137, and Cys-167.

It belongs to the complex I 20 kDa subunit family. In terms of assembly, NDH-1 is composed of 14 different subunits. Subunits NuoB, C, D, E, F, and G constitute the peripheral sector of the complex. The cofactor is [4Fe-4S] cluster.

It is found in the cell inner membrane. It carries out the reaction a quinone + NADH + 5 H(+)(in) = a quinol + NAD(+) + 4 H(+)(out). Functionally, NDH-1 shuttles electrons from NADH, via FMN and iron-sulfur (Fe-S) centers, to quinones in the respiratory chain. The immediate electron acceptor for the enzyme in this species is believed to be ubiquinone. Couples the redox reaction to proton translocation (for every two electrons transferred, four hydrogen ions are translocated across the cytoplasmic membrane), and thus conserves the redox energy in a proton gradient. This Bradyrhizobium sp. (strain ORS 278) protein is NADH-quinone oxidoreductase subunit B.